The sequence spans 346 residues: tRNA N6-adenosine threonylcarbamoyltransferase (346 aa).

The Fe cation site is built by H111 and H115. Substrate-binding positions include 134–138, D167, G180, and N277; that span reads LVSGG. D305 contributes to the Fe cation binding site.

This sequence belongs to the KAE1 / TsaD family. Requires Fe(2+) as cofactor.

It localises to the cytoplasm. It carries out the reaction L-threonylcarbamoyladenylate + adenosine(37) in tRNA = N(6)-L-threonylcarbamoyladenosine(37) in tRNA + AMP + H(+). Functionally, required for the formation of a threonylcarbamoyl group on adenosine at position 37 (t(6)A37) in tRNAs that read codons beginning with adenine. Is involved in the transfer of the threonylcarbamoyl moiety of threonylcarbamoyl-AMP (TC-AMP) to the N6 group of A37, together with TsaE and TsaB. TsaD likely plays a direct catalytic role in this reaction. The sequence is that of tRNA N6-adenosine threonylcarbamoyltransferase from Bordetella bronchiseptica (strain ATCC BAA-588 / NCTC 13252 / RB50) (Alcaligenes bronchisepticus).